The primary structure comprises 610 residues: Aspartate--tRNA(Asp/Asn) ligase (610 aa).

Position 196 (glutamate 196) interacts with L-aspartate. The interval 220–223 (QIFK) is aspartate. Arginine 242 contacts L-aspartate. ATP is bound by residues 242-244 (RDE) and glutamine 251. Residue histidine 465 participates in L-aspartate binding. Glutamate 499 is a binding site for ATP. Arginine 506 is a binding site for L-aspartate. An ATP-binding site is contributed by 551–554 (GMDR).

It belongs to the class-II aminoacyl-tRNA synthetase family. Type 1 subfamily. Homodimer.

The protein resides in the cytoplasm. It carries out the reaction tRNA(Asx) + L-aspartate + ATP = L-aspartyl-tRNA(Asx) + AMP + diphosphate. In terms of biological role, aspartyl-tRNA synthetase with relaxed tRNA specificity since it is able to aspartylate not only its cognate tRNA(Asp) but also tRNA(Asn). Reaction proceeds in two steps: L-aspartate is first activated by ATP to form Asp-AMP and then transferred to the acceptor end of tRNA(Asp/Asn). The chain is Aspartate--tRNA(Asp/Asn) ligase from Nitratidesulfovibrio vulgaris (strain ATCC 29579 / DSM 644 / CCUG 34227 / NCIMB 8303 / VKM B-1760 / Hildenborough) (Desulfovibrio vulgaris).